Here is a 247-residue protein sequence, read N- to C-terminus: tRNA uridine(34) hydroxylase (247 aa).

Residues 123–217 (ITKQDVIVDT…YLEDTQNKNN (95 aa)) form the Rhodanese domain. Cys177 serves as the catalytic Cysteine persulfide intermediate.

Belongs to the TrhO family.

It carries out the reaction uridine(34) in tRNA + AH2 + O2 = 5-hydroxyuridine(34) in tRNA + A + H2O. In terms of biological role, catalyzes oxygen-dependent 5-hydroxyuridine (ho5U) modification at position 34 in tRNAs. The polypeptide is tRNA uridine(34) hydroxylase (Rickettsia bellii (strain RML369-C)).